Reading from the N-terminus, the 68-residue chain is Kasstasin (68 aa).

A signal peptide spans 1–20 (MMKKSMLLLFFLGMVSFSLA). A propeptide spanning residues 21 to 44 (DDKREDEGEEKRADEGEEKRAAEE) is cleaved from the precursor. The interval 22–41 (DKREDEGEEKRADEGEEKRA) is disordered. Residue Lys-67 is modified to Lysine amide.

The protein belongs to the frog skin active peptide (FSAP) family. Brevinin subfamily. In terms of tissue distribution, expressed by the skin dorsal glands.

Its subcellular location is the secreted. In terms of biological role, peptide with potent vasoconstrictor properties (EC50=25 pM). Has moderate antimicrobial activity against Gram-positive bacterium S.aureus (MIC=55 uM) and against Gram-negative bacterium E.coli (MIC=110 uM). Not active against fungus C.albicans. Has weak hemolytic activity against horse erythrocytes. The protein is Kasstasin of Phlyctimantis maculatus (Red-legged running frog).